Here is a 283-residue protein sequence, read N- to C-terminus: Methylamine utilization ferredoxin-type protein MauN (283 aa).

4Fe-4S ferredoxin-type domains lie at 217-248 and 251-280; these read VRVSARNRDACDNCGACFSTCPEPHVIVPALK and GSPLILSGDCINCGGCIDSCPNRVFAMASR. Cysteine 227, cysteine 230, cysteine 233, cysteine 237, cysteine 260, cysteine 263, cysteine 266, and cysteine 270 together coordinate [4Fe-4S] cluster.

It functions in the pathway one-carbon metabolism; methylamine degradation. In terms of biological role, involved in electron transfer. The sequence is that of Methylamine utilization ferredoxin-type protein MauN (mauN) from Paracoccus denitrificans (strain Pd 1222).